We begin with the raw amino-acid sequence, 907 residues long: Protein translocase subunit SecA (907 aa).

ATP contacts are provided by residues Gln-86, 104–108, and Asp-511; that span reads GEGKT. 2 stretches are compositionally biased toward basic and acidic residues: residues 838-856 and 869-888; these read AQEEWKESMSEIKAEHESV and EEAPKVQQVKREGPKIKRND. Residues 838–907 form a disordered region; sequence AQEEWKESMS…YKQCHGKVVD (70 aa). Positions 890, 892, 901, and 902 each coordinate Zn(2+). A compositionally biased stretch (basic residues) spans 896 to 907; it reads KKYKQCHGKVVD.

Belongs to the SecA family. Monomer and homodimer. Part of the essential Sec protein translocation apparatus which comprises SecA, SecYEG and auxiliary proteins SecDF-YajC and YidC. Zn(2+) serves as cofactor.

The protein localises to the cell inner membrane. Its subcellular location is the cytoplasm. The catalysed reaction is ATP + H2O + cellular proteinSide 1 = ADP + phosphate + cellular proteinSide 2.. Functionally, part of the Sec protein translocase complex. Interacts with the SecYEG preprotein conducting channel. Has a central role in coupling the hydrolysis of ATP to the transfer of proteins into and across the cell membrane, serving both as a receptor for the preprotein-SecB complex and as an ATP-driven molecular motor driving the stepwise translocation of polypeptide chains across the membrane. In Francisella philomiragia subsp. philomiragia (strain ATCC 25017 / CCUG 19701 / FSC 153 / O#319-036), this protein is Protein translocase subunit SecA.